The sequence spans 740 residues: Anaphase-promoting complex subunit 5 (740 aa).

S180 is subject to Phosphoserine. TPR repeat units follow at residues 194–234, 235–285, 286–322, 323–363, 364–403, 404–451, 452–485, 486–525, 526–565, 566–605, 606–645, 646–681, and 682–721; these read QKQA…FNPD, FAEA…GRSL, RYAA…SNDH, VCLQ…YLAS, LGIQ…SELI, DISI…TESF, AVAL…FPPN, SQHA…ALNG, IEGV…TEMV, ISVL…QYLA, SETV…VLDK, GRAM…NLSE, and AKNY…CAMI. T217 is subject to Phosphothreonine.

Belongs to the APC5 family. The mammalian APC/C is composed at least of 14 distinct subunits ANAPC1, ANAPC2, CDC27/APC3, ANAPC4, ANAPC5, CDC16/APC6, ANAPC7, CDC23/APC8, ANAPC10, ANAPC11, CDC26/APC12, ANAPC13, ANAPC15 and ANAPC16 that assemble into a complex of at least 19 chains with a combined molecular mass of around 1.2 MDa; APC/C interacts with FZR1 and FBXO5.

The protein resides in the nucleus. It localises to the cytoplasm. The protein localises to the cytoskeleton. Its subcellular location is the spindle. It functions in the pathway protein modification; protein ubiquitination. Functionally, component of the anaphase promoting complex/cyclosome (APC/C), a cell cycle-regulated E3 ubiquitin ligase that controls progression through mitosis and the G1 phase of the cell cycle. The APC/C complex acts by mediating ubiquitination and subsequent degradation of target proteins: it mainly mediates the formation of 'Lys-11'-linked polyubiquitin chains and, to a lower extent, the formation of 'Lys-48'- and 'Lys-63'-linked polyubiquitin chains. The APC/C complex catalyzes assembly of branched 'Lys-11'-/'Lys-48'-linked branched ubiquitin chains on target proteins. The chain is Anaphase-promoting complex subunit 5 (Anapc5) from Mus musculus (Mouse).